A 463-amino-acid chain; its full sequence is Type IV secretion system protein PtlD (463 aa).

A signal peptide spans 1–24 (MAGLSRILLSCTLACLLAGQAAQA). The next 5 membrane-spanning stretches (helical) occupy residues 118 to 138 (LQPL…YALL), 232 to 252 (WLLC…LAAS), 253 to 273 (LLIV…LFLV), 294 to 314 (ALVF…VLAG), and 333 to 353 (MLAA…VPLA). The span at 376–410 (AHRQAAARQYAPRPAAAAAAAGPHQAGTYAASATP) shows a compositional bias: low complexity. The disordered stretch occupies residues 376-463 (AHRQAAARQY…RVLPRKPNLP (88 aa)). The segment covering 411–420 (APAPARPAPS) has biased composition (pro residues). The span at 441-455 (VRRDDRPAPAPDRRV) shows a compositional bias: basic and acidic residues.

It is found in the cell membrane. Component of the type IV secretion system ptl required for secretion of assembled pertussis toxin (PTX) through the outer membrane. The chain is Type IV secretion system protein PtlD (ptlD) from Bordetella pertussis (strain Tohama I / ATCC BAA-589 / NCTC 13251).